The chain runs to 102 residues: Small ribosomal subunit protein uS10 (102 aa).

The protein belongs to the universal ribosomal protein uS10 family. In terms of assembly, part of the 30S ribosomal subunit.

Functionally, involved in the binding of tRNA to the ribosomes. The polypeptide is Small ribosomal subunit protein uS10 (Streptococcus suis (strain 98HAH33)).